The sequence spans 482 residues: Anaerobic nitric oxide reductase flavorubredoxin (482 aa).

The tract at residues 30-210 (LRGSSYNSYL…PFSRLVTPKI (181 aa)) is zinc metallo-hydrolase. Fe cation contacts are provided by His79, Glu81, Asp83, His147, Asp166, and His227. In terms of domain architecture, Flavodoxin-like spans 254–393 (ITIFYDTMSN…LCRQHGRDIA (140 aa)). FMN contacts are provided by residues 260 to 264 (TMSNN) and 342 to 369 (AFGS…EMSL). The Rubredoxin-like domain maps to 426–477 (GPMMQCSVCQWVYDPAKGEPNQDVQPGTPWSEVPDNFLCPECSLGKDVFDVL). Cys431, Cys434, Cys464, and Cys467 together coordinate Fe cation.

It in the N-terminal section; belongs to the zinc metallo-hydrolase group 3 family. As to quaternary structure, homotetramer. Requires Fe cation as cofactor. It depends on FMN as a cofactor.

It localises to the cytoplasm. Its pathway is nitrogen metabolism; nitric oxide reduction. Anaerobic nitric oxide reductase; uses NADH to detoxify nitric oxide (NO), protecting several 4Fe-4S NO-sensitive enzymes. Has at least 2 reductase partners, only one of which (NorW, flavorubredoxin reductase) has been identified. NO probably binds to the di-iron center; electrons enter from the NorW at rubredoxin and are transferred sequentially to the FMN center and the di-iron center. Also able to function as an aerobic oxygen reductase. The polypeptide is Anaerobic nitric oxide reductase flavorubredoxin (Klebsiella pneumoniae subsp. pneumoniae (strain ATCC 700721 / MGH 78578)).